The sequence spans 297 residues: 2-phospho-L-lactate transferase (297 aa).

Asp-49 serves as a coordination point for 7,8-didemethyl-8-hydroxy-5-deazariboflavin.

Belongs to the CofD family. Homodimer. The cofactor is Mg(2+).

The catalysed reaction is (2S)-lactyl-2-diphospho-5'-guanosine + 7,8-didemethyl-8-hydroxy-5-deazariboflavin = oxidized coenzyme F420-0 + GMP + H(+). The protein operates within cofactor biosynthesis; coenzyme F420 biosynthesis. In terms of biological role, catalyzes the transfer of the 2-phospholactate moiety from (2S)-lactyl-2-diphospho-5'-guanosine to 7,8-didemethyl-8-hydroxy-5-deazariboflavin (FO) with the formation of oxidized coenzyme F420-0 and GMP. This chain is 2-phospho-L-lactate transferase, found in Methanospirillum hungatei JF-1 (strain ATCC 27890 / DSM 864 / NBRC 100397 / JF-1).